Consider the following 356-residue polypeptide: MVKENICIVYGGKSAEHDVSKLTAQNVLNAIDKERYLVDIIYITNDGLWKKKENITEEIKEIESLNMTDIEAGEITILLKESSNGKPYDAIFPLLHGPNGEDGTIQGLFEVLDLPYVGNGVLAASSSMDKLVMKQLFEHRGLPQLPYISFLRSEYEKYEGNIIKLVKDKLTYPVFVKPANLGSSVGISKCNNEDELKSGIEEAFQFDRKLVIEQGINAREVEVAVLGNDYPETTWPGEVIKDVAFYDYKSKYKDGKISLQIPAELDEEVQMTLRNMALEAFKATDCSGLVRADFFVTEDNQIFINETNAMPGFTAFSMYPSLWENMGLSYSDLITKLIDLAKERHEDKKKNKYTID.

An ATP-grasp domain is found at 134-339 (KQLFEHRGLP…YSDLITKLID (206 aa)). 167-222 (KDKLTYPVFVKPANLGSSVGISKCNNEDELKSGIEEAFQFDRKLVIEQGINAREVE) serves as a coordination point for ATP. Asp293, Glu306, and Asn308 together coordinate Mg(2+).

This sequence belongs to the D-alanine--D-alanine ligase family. Requires Mg(2+) as cofactor. The cofactor is Mn(2+).

The protein resides in the cytoplasm. The enzyme catalyses 2 D-alanine + ATP = D-alanyl-D-alanine + ADP + phosphate + H(+). It functions in the pathway cell wall biogenesis; peptidoglycan biosynthesis. Its function is as follows. Cell wall formation. This Staphylococcus haemolyticus (strain JCSC1435) protein is D-alanine--D-alanine ligase.